The sequence spans 135 residues: Large ribosomal subunit protein uL16c (135 aa).

It belongs to the universal ribosomal protein uL16 family. In terms of assembly, part of the 50S ribosomal subunit.

It localises to the plastid. The protein localises to the chloroplast. The polypeptide is Large ribosomal subunit protein uL16c (Lactuca sativa (Garden lettuce)).